A 138-amino-acid polypeptide reads, in one-letter code: ATP synthase epsilon chain (138 aa).

It belongs to the ATPase epsilon chain family. F-type ATPases have 2 components, CF(1) - the catalytic core - and CF(0) - the membrane proton channel. CF(1) has five subunits: alpha(3), beta(3), gamma(1), delta(1), epsilon(1). CF(0) has three main subunits: a, b and c.

The protein resides in the cell membrane. Functionally, produces ATP from ADP in the presence of a proton gradient across the membrane. The sequence is that of ATP synthase epsilon chain (atpC) from Buchnera aphidicola subsp. Schizaphis graminum (strain Sg).